Consider the following 180-residue polypeptide: MFPMVTGFMNYGQQTVRAARYIGQSFMITLSHANRLPVTIQYPYEKSITSERFRGRIHFELDKCIACEVCVRVCPIDLPVVDWRLETDIRKKRLLNYSIDFGICIFCGNCVEYCPTNCLSMTEEYELSTYDRHELNYNQIALGRLPMSVIEDYTIQTILNSTQIQIVTDKPLNSRTITNS.

2 consecutive 4Fe-4S ferredoxin-type domains span residues 55-84 (GRIHFELDKCIACEVCVRVCPIDLPVVDWR) and 95-124 (LNYSIDFGICIFCGNCVEYCPTNCLSMTEE). Residues cysteine 64, cysteine 67, cysteine 70, cysteine 74, cysteine 104, cysteine 107, cysteine 110, and cysteine 114 each contribute to the [4Fe-4S] cluster site.

Belongs to the complex I 23 kDa subunit family. As to quaternary structure, NDH is composed of at least 16 different subunits, 5 of which are encoded in the nucleus. [4Fe-4S] cluster is required as a cofactor.

The protein localises to the plastid. Its subcellular location is the chloroplast thylakoid membrane. It catalyses the reaction a plastoquinone + NADH + (n+1) H(+)(in) = a plastoquinol + NAD(+) + n H(+)(out). The catalysed reaction is a plastoquinone + NADPH + (n+1) H(+)(in) = a plastoquinol + NADP(+) + n H(+)(out). Its function is as follows. NDH shuttles electrons from NAD(P)H:plastoquinone, via FMN and iron-sulfur (Fe-S) centers, to quinones in the photosynthetic chain and possibly in a chloroplast respiratory chain. The immediate electron acceptor for the enzyme in this species is believed to be plastoquinone. Couples the redox reaction to proton translocation, and thus conserves the redox energy in a proton gradient. The polypeptide is NAD(P)H-quinone oxidoreductase subunit I, chloroplastic (Chloranthus spicatus (Chulantree)).